The primary structure comprises 443 residues: Serine/threonine-protein kinase 40 (443 aa).

Positions 1-11 (MKRRASERDAG) are enriched in basic and acidic residues. The disordered stretch occupies residues 1–26 (MKRRASERDAGETSARSKALCSSISG). Positions 14 to 26 (SARSKALCSSISG) are enriched in polar residues. The region spanning 35-332 (FILGPRLGNS…EVLESLGAII (298 aa)) is the Protein kinase domain. Residues 41–49 (LGNSPVPSI) and Lys66 contribute to the ATP site. Asp197 (proton acceptor) is an active-site residue.

It belongs to the protein kinase superfamily. CAMK Ser/Thr protein kinase family.

Its subcellular location is the nucleus. The protein localises to the cytoplasm. It carries out the reaction L-seryl-[protein] + ATP = O-phospho-L-seryl-[protein] + ADP + H(+). The enzyme catalyses L-threonyl-[protein] + ATP = O-phospho-L-threonyl-[protein] + ADP + H(+). In terms of biological role, may be a negative regulator of NF-kappa-B and p53-mediated gene transcription. The chain is Serine/threonine-protein kinase 40 (stk40) from Xenopus tropicalis (Western clawed frog).